Consider the following 117-residue polypeptide: Large ribosomal subunit protein bL20 (117 aa).

Belongs to the bacterial ribosomal protein bL20 family.

Its function is as follows. Binds directly to 23S ribosomal RNA and is necessary for the in vitro assembly process of the 50S ribosomal subunit. It is not involved in the protein synthesizing functions of that subunit. The polypeptide is Large ribosomal subunit protein bL20 (Mesomycoplasma hyopneumoniae (strain J / ATCC 25934 / NCTC 10110) (Mycoplasma hyopneumoniae)).